Here is a 660-residue protein sequence, read N- to C-terminus: Probable rhamnogalacturonate lyase B (660 aa).

Residues M1–A20 form the signal peptide. N-linked (GlcNAc...) asparagine glycosylation is found at N22, N27, N109, N142, N238, N284, N432, N492, N532, N594, and N635.

This sequence belongs to the polysaccharide lyase 4 family.

It localises to the secreted. It carries out the reaction Endotype eliminative cleavage of L-alpha-rhamnopyranosyl-(1-&gt;4)-alpha-D-galactopyranosyluronic acid bonds of rhamnogalacturonan I domains in ramified hairy regions of pectin leaving L-rhamnopyranose at the reducing end and 4-deoxy-4,5-unsaturated D-galactopyranosyluronic acid at the non-reducing end.. In terms of biological role, pectinolytic enzymes consist of four classes of enzymes: pectin lyase, polygalacturonase, pectin methylesterase and rhamnogalacturonase. Degrades the rhamnogalacturonan I (RG-I) backbone of pectin. The chain is Probable rhamnogalacturonate lyase B (rglB) from Aspergillus terreus (strain NIH 2624 / FGSC A1156).